We begin with the raw amino-acid sequence, 312 residues long: Elongation factor Ts (312 aa).

The interval 80–83 (TDFV) is involved in Mg(2+) ion dislocation from EF-Tu.

This sequence belongs to the EF-Ts family.

Its subcellular location is the cytoplasm. Functionally, associates with the EF-Tu.GDP complex and induces the exchange of GDP to GTP. It remains bound to the aminoacyl-tRNA.EF-Tu.GTP complex up to the GTP hydrolysis stage on the ribosome. The polypeptide is Elongation factor Ts (Paramagnetospirillum magneticum (strain ATCC 700264 / AMB-1) (Magnetospirillum magneticum)).